The sequence spans 465 residues: Monocarboxylate transporter 4 (465 aa).

The Cytoplasmic segment spans residues 2 to 17; that stretch reads GGAVVDEGPTGVKAPD. Residues 18 to 38 traverse the membrane as a helical segment; it reads GGWGWAVLFGCFVITGFSYAF. Residues 39 to 61 are Extracellular-facing; the sequence is PKAVSVFFKELIQEFGIGYSDTA. A helical transmembrane segment spans residues 62 to 82; that stretch reads WISSILLAMLYGTGPLCSVCV. At 83 to 84 the chain is on the cytoplasmic side; the sequence is NR. Residues 85–105 traverse the membrane as a helical segment; the sequence is FGCRPVMLVGGLFASLGMVAA. Residues 106–109 are Extracellular-facing; sequence SFCR. Residues 110 to 130 form a helical membrane-spanning segment; that stretch reads SIIQVYLTTGVITGLGLALNF. Residues 131–149 lie on the Cytoplasmic side of the membrane; that stretch reads QPSLIMLNRYFSKRRPMAN. Residues 150 to 170 form a helical membrane-spanning segment; sequence GLAAAGSPVFLCALSPLGQLL. Residues 171 to 179 lie on the Extracellular side of the membrane; the sequence is QDRYGWRGG. A helical transmembrane segment spans residues 180–200; the sequence is FLILGGLLLNCCVCAALMRPL. At 201–227 the chain is on the cytoplasmic side; sequence VVTAQPGSGPPRPSRRLLDLSVFRDRG. Residues 228-248 form a helical membrane-spanning segment; that stretch reads FVLYAVAASVMVLGLFVPPVF. The Extracellular portion of the chain corresponds to 249–264; it reads VVSYAKDLGVPDTKAA. The chain crosses the membrane as a helical span at residues 265 to 285; that stretch reads FLLTILGFIDIFARPAAGFVA. Topologically, residues 286-294 are cytoplasmic; it reads GLGKVRPYS. A helical transmembrane segment spans residues 295–315; the sequence is VYLFSFSMFFNGLADLAGSTA. Residues 316 to 317 are Extracellular-facing; the sequence is GD. The helical transmembrane segment at 318–338 threads the bilayer; it reads YGGLVVFCIFFGISYGMVGAL. The Cytoplasmic portion of the chain corresponds to 339 to 351; it reads QFEVLMAIVGTHK. A helical transmembrane segment spans residues 352–372; it reads FSSAIGLVLLMEAVAVLVGPP. Residues 373-384 are Extracellular-facing; the sequence is SGGKLLDATHVY. The chain crosses the membrane as a helical span at residues 385 to 405; it reads MYVFILAGAEVLTSSLILLLG. Over 406–465 the chain is Cytoplasmic; it reads NFFCIRKKPKEPQPEVAAAEEEKLHKPPADSGVDLREVEHFLKAEPEKNGEVVHTPETSV. Positions 419–438 are disordered; the sequence is PEVAAAEEEKLHKPPADSGV. Basolateral sorting signal stretches follow at residues 423-441 and 441-465; these read AAEE…VDLR and REVE…ETSV. Positions 425-438 are enriched in basic and acidic residues; that stretch reads EEEKLHKPPADSGV. S436 is modified (phosphoserine). A Phosphothreonine modification is found at T460. At S464 the chain carries Phosphoserine.

Belongs to the major facilitator superfamily. Monocarboxylate porter (TC 2.A.1.13) family. As to quaternary structure, interacts with BSG; interaction mediates SLC16A3 targeting to the plasma membrane. In terms of tissue distribution, highly expressed in skeletal muscle.

It localises to the cell membrane. The protein localises to the basolateral cell membrane. It catalyses the reaction (S)-lactate(in) + H(+)(in) = (S)-lactate(out) + H(+)(out). The catalysed reaction is pyruvate(out) + H(+)(out) = pyruvate(in) + H(+)(in). In terms of biological role, proton-dependent transporter of monocarboxylates such as L-lactate and pyruvate. Plays a predominant role in L-lactate efflux from highly glycolytic cells. This Homo sapiens (Human) protein is Monocarboxylate transporter 4 (SLC16A3).